Reading from the N-terminus, the 247-residue chain is Segregation and condensation protein A (247 aa).

It belongs to the ScpA family. Component of a cohesin-like complex composed of ScpA, ScpB and the Smc homodimer, in which ScpA and ScpB bind to the head domain of Smc. The presence of the three proteins is required for the association of the complex with DNA.

It localises to the cytoplasm. Participates in chromosomal partition during cell division. May act via the formation of a condensin-like complex containing Smc and ScpB that pull DNA away from mid-cell into both cell halves. This chain is Segregation and condensation protein A, found in Caldanaerobacter subterraneus subsp. tengcongensis (strain DSM 15242 / JCM 11007 / NBRC 100824 / MB4) (Thermoanaerobacter tengcongensis).